Here is a 259-residue protein sequence, read N- to C-terminus: Probable transcriptional regulatory protein Noca_2383 (259 aa).

It belongs to the TACO1 family.

The protein localises to the cytoplasm. This chain is Probable transcriptional regulatory protein Noca_2383, found in Nocardioides sp. (strain ATCC BAA-499 / JS614).